Reading from the N-terminus, the 337-residue chain is Heat-inducible transcription repressor HrcA (337 aa).

Belongs to the HrcA family.

In terms of biological role, negative regulator of class I heat shock genes (grpE-dnaK-dnaJ and groELS operons). Prevents heat-shock induction of these operons. This chain is Heat-inducible transcription repressor HrcA, found in Metamycoplasma arthritidis (strain 158L3-1) (Mycoplasma arthritidis).